The chain runs to 530 residues: DNA damage-binding protein cmr1 (530 aa).

2 disordered regions span residues 34–115 (VGLF…RKSD) and 224–250 (TKPV…LTTL). The segment covering 52–62 (AKKKKPAPKKV) has biased composition (basic residues). The segment covering 89-108 (EVAKRKADEHDAALQEAERA) has biased composition (basic and acidic residues). Residues 188–229 (LTPERIYAMTFHPSESKPLIFAGDKMGHLGVLDASQTKPVSA) form a WD 1 repeat. The segment covering 233-244 (DEDEEDDDDDPD) has biased composition (acidic residues). WD repeat units lie at residues 252 to 292 (PHTR…SVER), 302 to 339 (VPIS…QDSA), 344 to 384 (LSDK…HKSP), 389 to 430 (EHES…ASWK), 453 to 496 (GRWV…LAQL), and 499 to 530 (DGIT…CLWM).

Belongs to the WD repeat DDB2/WDR76 family.

DNA-binding protein that binds to both single- and double-stranded DNA. Binds preferentially to UV-damaged DNA. May be involved in DNA-metabolic processes. This is DNA damage-binding protein cmr1 from Aspergillus terreus (strain NIH 2624 / FGSC A1156).